Here is a 154-residue protein sequence, read N- to C-terminus: Putative nickel-responsive regulator (154 aa).

Residues H95, H106, H108, and C114 each coordinate Ni(2+).

It belongs to the transcriptional regulatory CopG/NikR family. It depends on Ni(2+) as a cofactor.

Functionally, transcriptional regulator. In Caldanaerobacter subterraneus subsp. tengcongensis (strain DSM 15242 / JCM 11007 / NBRC 100824 / MB4) (Thermoanaerobacter tengcongensis), this protein is Putative nickel-responsive regulator.